The chain runs to 223 residues: Probable cytokinin riboside 5'-monophosphate phosphoribohydrolase LOGL1 (223 aa).

Substrate is bound by residues E89, 107–108, 124–130, and T136; these read RK and GYGTMEE. The segment at 201–223 is disordered; sequence QEVAPRTSWEMSELGYGKTPEES.

This sequence belongs to the LOG family. As to expression, expressed in shoot apex, immature inflorescences and flowers.

The enzyme catalyses N(6)-(dimethylallyl)adenosine 5'-phosphate + H2O = N(6)-dimethylallyladenine + D-ribose 5-phosphate. It carries out the reaction 9-ribosyl-trans-zeatin 5'-phosphate + H2O = trans-zeatin + D-ribose 5-phosphate. Cytokinin-activating enzyme working in the direct activation pathway. Phosphoribohydrolase that converts inactive cytokinin nucleotides to the biologically active free-base forms. The polypeptide is Probable cytokinin riboside 5'-monophosphate phosphoribohydrolase LOGL1 (LOGL1) (Oryza sativa subsp. japonica (Rice)).